The following is a 399-amino-acid chain: Methylthioribose kinase (399 aa).

ATP contacts are provided by residues asparagine 40, lysine 57, and 111–113; that span reads EDL. Aspartate 229 lines the substrate pocket. 246 to 248 is a binding site for ATP; the sequence is DAE. Position 344 (arginine 344) interacts with substrate.

It belongs to the methylthioribose kinase family. In terms of assembly, homodimer.

The enzyme catalyses 5-(methylsulfanyl)-D-ribose + ATP = 5-(methylsulfanyl)-alpha-D-ribose 1-phosphate + ADP + H(+). It participates in amino-acid biosynthesis; L-methionine biosynthesis via salvage pathway; S-methyl-5-thio-alpha-D-ribose 1-phosphate from S-methyl-5'-thioadenosine (hydrolase route): step 2/2. Catalyzes the phosphorylation of methylthioribose into methylthioribose-1-phosphate. The sequence is that of Methylthioribose kinase from Erwinia tasmaniensis (strain DSM 17950 / CFBP 7177 / CIP 109463 / NCPPB 4357 / Et1/99).